The chain runs to 305 residues: Regulator of microtubule dynamics protein 1 (305 aa).

Lys160 carries the N6-succinyllysine modification. TPR repeat units follow at residues 163-199 (AICI…NPKD) and 217-253 (PWYQ…DPNF). Lys245 bears the N6-succinyllysine mark.

This sequence belongs to the RMDN family. In terms of assembly, interacts with microtubules.

The protein localises to the cytoplasm. It is found in the cytoskeleton. The protein resides in the spindle. Its subcellular location is the spindle pole. This is Regulator of microtubule dynamics protein 1 (Rmdn1) from Mus musculus (Mouse).